A 415-amino-acid polypeptide reads, in one-letter code: Serine hydroxymethyltransferase (415 aa).

The span at 1 to 10 shows a compositional bias: basic and acidic residues; the sequence is MERSHIRDVD. The tract at residues 1-21 is disordered; sequence MERSHIRDVDPDAADALSSER. Residues L119 and 123-125 each bind (6S)-5,6,7,8-tetrahydrofolate; that span reads GHL. K228 carries the post-translational modification N6-(pyridoxal phosphate)lysine. 353 to 355 contacts (6S)-5,6,7,8-tetrahydrofolate; it reads SAF.

It belongs to the SHMT family. As to quaternary structure, homodimer. It depends on pyridoxal 5'-phosphate as a cofactor.

The protein resides in the cytoplasm. It catalyses the reaction (6R)-5,10-methylene-5,6,7,8-tetrahydrofolate + glycine + H2O = (6S)-5,6,7,8-tetrahydrofolate + L-serine. It functions in the pathway one-carbon metabolism; tetrahydrofolate interconversion. The protein operates within amino-acid biosynthesis; glycine biosynthesis; glycine from L-serine: step 1/1. In terms of biological role, catalyzes the reversible interconversion of serine and glycine with tetrahydrofolate (THF) serving as the one-carbon carrier. Also exhibits THF-independent aldolase activity toward beta-hydroxyamino acids, producing glycine and aldehydes, via a retro-aldol mechanism. The sequence is that of Serine hydroxymethyltransferase from Haloquadratum walsbyi (strain DSM 16790 / HBSQ001).